A 547-amino-acid chain; its full sequence is Chaperonin GroEL 1 (547 aa).

Residues 30 to 33 (TLGP), K51, 87 to 91 (DGTTT), G415, and D496 each bind ATP.

It belongs to the chaperonin (HSP60) family. In terms of assembly, forms a cylinder of 14 subunits composed of two heptameric rings stacked back-to-back. Interacts with the co-chaperonin GroES.

The protein resides in the cytoplasm. It catalyses the reaction ATP + H2O + a folded polypeptide = ADP + phosphate + an unfolded polypeptide.. In terms of biological role, together with its co-chaperonin GroES, plays an essential role in assisting protein folding. The GroEL-GroES system forms a nano-cage that allows encapsulation of the non-native substrate proteins and provides a physical environment optimized to promote and accelerate protein folding. In Rhodopseudomonas palustris (strain ATCC BAA-98 / CGA009), this protein is Chaperonin GroEL 1.